Reading from the N-terminus, the 90-residue chain is UPF0386 protein Rru_A2144 (90 aa).

This sequence belongs to the UPF0386 family.

This Rhodospirillum rubrum (strain ATCC 11170 / ATH 1.1.1 / DSM 467 / LMG 4362 / NCIMB 8255 / S1) protein is UPF0386 protein Rru_A2144.